We begin with the raw amino-acid sequence, 421 residues long: Testin (421 aa).

The region spanning 92–199 (MILTNPVAAK…GDVKLPCEMD (108 aa)) is the PET domain. The tract at residues 133–164 (EKQPVAGSEGAQYRKKQLAKQLPAHDQDPSKC) is disordered. Residues 155–164 (PAHDQDPSKC) show a composition bias toward basic and acidic residues. 3 consecutive LIM zinc-binding domains span residues 234–297 (YSCY…CDSE), 299–359 (PRCA…NHAV), and 362–421 (QGCH…KMMS).

This sequence belongs to the prickle / espinas / testin family. As to quaternary structure, interacts via LIM domain 1 with ZYX. Interacts (via LIM domain 3) with ENAH and VASP. Interacts with ALKBH4, talin, actin, alpha-actinin, GRIP1 and PXN. Interacts (via LIM domain 2) with ACTL7A (via N-terminus). Heterodimer with ACTL7A; the heterodimer interacts with ENAH to form a heterotrimer.

It is found in the cytoplasm. The protein resides in the cell junction. Its subcellular location is the focal adhesion. Scaffold protein that may play a role in cell adhesion, cell spreading and in the reorganization of the actin cytoskeleton. Plays a role in the regulation of cell proliferation. May act as a tumor suppressor. The protein is Testin (TES) of Microcebus murinus (Gray mouse lemur).